A 150-amino-acid polypeptide reads, in one-letter code: uncharacterized protein (150 aa).

This sequence to A.tumefaciens conjugal transfer protein TraB.

This is an uncharacterized protein from Agrobacterium tumefaciens (strain 15955).